Here is a 471-residue protein sequence, read N- to C-terminus: 3-isopropylmalate dehydratase large subunit (471 aa).

Residues cysteine 347, cysteine 407, and cysteine 410 each contribute to the [4Fe-4S] cluster site.

Belongs to the aconitase/IPM isomerase family. LeuC type 1 subfamily. In terms of assembly, heterodimer of LeuC and LeuD. The cofactor is [4Fe-4S] cluster.

It catalyses the reaction (2R,3S)-3-isopropylmalate = (2S)-2-isopropylmalate. It functions in the pathway amino-acid biosynthesis; L-leucine biosynthesis; L-leucine from 3-methyl-2-oxobutanoate: step 2/4. Catalyzes the isomerization between 2-isopropylmalate and 3-isopropylmalate, via the formation of 2-isopropylmaleate. The polypeptide is 3-isopropylmalate dehydratase large subunit (Buchnera aphidicola subsp. Baizongia pistaciae (strain Bp)).